We begin with the raw amino-acid sequence, 373 residues long: Glutamine synthetase (373 aa).

Alanine 2 is modified (N-acetylalanine). The interval 2–25 (ATSASSHLNKGIKQMYMSLPQGEK) is required for glutamine-induced ubiquitination by CRL4(CRBN) and proteasomal degradation. 2 positions are modified to N6-acetyllysine: lysine 11 and lysine 14. In terms of domain architecture, GS beta-grasp spans 24 to 106 (EKVQAMYIWV…VLCEVFKYNR (83 aa)). Tyrosine 104 bears the Phosphotyrosine mark. The GS catalytic domain maps to 113 to 373 (LRHICKRIMD…TGDEPFQYKN (261 aa)). Glutamate 134 serves as a coordination point for ATP. Mn(2+) contacts are provided by glutamate 134, glutamate 136, glutamate 196, and glutamate 203. 203–208 (EFQIGP) lines the ATP pocket. An L-glutamate-binding site is contributed by 246 to 247 (NW). Residue histidine 253 participates in Mn(2+) binding. ATP contacts are provided by residues 255-257 (NFS), arginine 319, and arginine 324. An L-glutamate-binding site is contributed by arginine 319. 336-338 (YFE) lines the ADP pocket. A Mn(2+)-binding site is contributed by glutamate 338. L-glutamate is bound at residue arginine 340. Residue serine 343 is modified to Phosphoserine.

Belongs to the glutamine synthetase family. As to quaternary structure, decamer; composed of two pentamers. Interacts with PALMD. Interacts with RHOJ. Interacts with BEST2; this interaction tethers a fraction of GLUL to the membrane, causing a decrease of cytosolic glutamine synthase (GS) activity and inhibits the chloride channel activity of BEST2 by affecting the gating at the aperture in the absence of intracellular glutamate. Mg(2+) is required as a cofactor. It depends on Mn(2+) as a cofactor. Post-translationally, acetylated by EP300/p300; acetylation is stimulated by increased glutamine levels and promotes ubiquitin-mediated proteasomal degradation. In terms of processing, palmitoylated; undergoes autopalmitoylation. Ubiquitinated by ZNRF1. Ubiquitinated by the DCX (DDB1-CUL4-X-box) E3 ubiquitin-protein ligase complex called CRL4(CRBN), leading to proteasomal degradation. In terms of tissue distribution, expressed in microvascular endothelial cells.

It localises to the cytoplasm. It is found in the cytosol. Its subcellular location is the microsome. The protein localises to the mitochondrion. The protein resides in the cell membrane. It catalyses the reaction L-glutamate + NH4(+) + ATP = L-glutamine + ADP + phosphate + H(+). It carries out the reaction L-cysteinyl-[protein] + hexadecanoyl-CoA = S-hexadecanoyl-L-cysteinyl-[protein] + CoA. Glutamine synthetase activity is inhibited by methionine sulfoximine (MSO). Glutamine synthetase that catalyzes the ATP-dependent conversion of glutamate and ammonia to glutamine. Its role depends on tissue localization: in the brain, it regulates the levels of toxic ammonia and converts neurotoxic glutamate to harmless glutamine, whereas in the liver, it is one of the enzymes responsible for the removal of ammonia. Plays a key role in ammonium detoxification during erythropoiesis: the glutamine synthetase activity is required to remove ammonium generated by porphobilinogen deaminase (HMBS) during heme biosynthesis to prevent ammonium accumulation and oxidative stress. Essential for proliferation of fetal skin fibroblasts. Independently of its glutamine synthetase activity, required for endothelial cell migration during vascular development. Involved in angiogenesis by regulating membrane localization and activation of the GTPase RHOJ, possibly by promoting RHOJ palmitoylation. May act as a palmitoyltransferase for RHOJ: able to autopalmitoylate and then transfer the palmitoyl group to RHOJ. Plays a role in ribosomal 40S subunit biogenesis. Through the interaction with BEST2, inhibits BEST2 channel activity by affecting the gating at the aperture in the absence of intracellular L-glutamate, but sensitizes BEST2 to intracellular L-glutamate, which promotes the opening of BEST2 and thus relieves its inhibitory effect on BEST2. The chain is Glutamine synthetase from Mus musculus (Mouse).